The sequence spans 206 residues: Guanylate kinase (206 aa).

The region spanning 4 to 182 (ANLFIISAPS…AVQNLIHIIS (179 aa)) is the Guanylate kinase-like domain. 11–18 (APSGAGKT) provides a ligand contact to ATP.

This sequence belongs to the guanylate kinase family.

Its subcellular location is the cytoplasm. It catalyses the reaction GMP + ATP = GDP + ADP. Functionally, essential for recycling GMP and indirectly, cGMP. This Coxiella burnetii (strain RSA 493 / Nine Mile phase I) protein is Guanylate kinase.